The following is a 248-amino-acid chain: ATP synthase subunit a, chloroplastic (248 aa).

The next 5 helical transmembrane spans lie at 38-58, 96-116, 135-155, 200-220, and 221-241; these read QVLITSWVVIAILLGSATIVV, VPFIGTMFLFIFVSNWSGALL, INTTVALALPTSVAYFYAGIS, LVVVVLVSLVPSLVPIPVMFL, and GLFTSGIQALIFATLAAAYIG.

It belongs to the ATPase A chain family. As to quaternary structure, F-type ATPases have 2 components, CF(1) - the catalytic core - and CF(0) - the membrane proton channel. CF(1) has five subunits: alpha(3), beta(3), gamma(1), delta(1), epsilon(1). CF(0) has four main subunits: a, b, b' and c.

The protein localises to the plastid. The protein resides in the chloroplast thylakoid membrane. In terms of biological role, key component of the proton channel; it plays a direct role in the translocation of protons across the membrane. This chain is ATP synthase subunit a, chloroplastic, found in Amborella trichopoda.